We begin with the raw amino-acid sequence, 110 residues long: Iron-sulfur cluster assembly protein CyaY (110 aa).

It belongs to the frataxin family.

In terms of biological role, involved in iron-sulfur (Fe-S) cluster assembly. May act as a regulator of Fe-S biogenesis. This chain is Iron-sulfur cluster assembly protein CyaY, found in Pseudomonas putida (strain W619).